The primary structure comprises 48 residues: MVITSGNDEDRGGQEKESKEESVLAMLGIIGTILNLIVIIFVYIYTTL.

The disordered stretch occupies residues 1–20; the sequence is MVITSGNDEDRGGQEKESKE. The span at 8-20 shows a compositional bias: basic and acidic residues; the sequence is DEDRGGQEKESKE. The chain crosses the membrane as a helical span at residues 24–44; the sequence is LAMLGIIGTILNLIVIIFVYI.

In terms of assembly, interacts with ATPase ATP2A2/SERCA2. Interacts with ATPase ATP2A3/SERCA3; the interaction occurs at low levels in low glucose conditions and is increased by high glucose levels. In the adult, expressed in Purkinje cells in the cerebellum, in motor neurons and interneurons in the spinal cord and in neurons of the cortex, hippocampus and thalamus (at protein level). Also detected in the developing cortex, hippocampus and thalamus at embryonic day E15.5 (at protein level).

Its subcellular location is the endoplasmic reticulum membrane. It is found in the extracellular vesicle membrane. Its function is as follows. In neurons, plays a role in the regulation of intracellular Ca(2+), possibly by acting as an activator of ATP2A2/SERCA2, thus increasing the efficiency with which Ca(2+) is removed from the cytoplasm. Inhibits differentiation of embryonic stem cells into neurons and inhibits neurite outgrowth, likely as a result of its role in intracellular Ca(2+) regulation. In pancreatic beta cells, lowers Ca(2+) levels in the endoplasmic reticulum and enhances glucose-stimulated insulin secretion. The chain is Protein TUNAR from Mus musculus (Mouse).